A 325-amino-acid chain; its full sequence is MRIRPTRRLLLGAVAPLALVPLVACGQASGSESGQQPGLGGCGTSAHGSADAHEKEFRALEKKFDAHPGVYAIDTRDGQEITHRADERFAYGSTFKALQAGAILAQVLRDGREVRRGAEADGMDKVVHYGQDAILPNSPVTEKHVADGMSLRELCDAVVAYSDNTAANLLFDQLGGRRGSTRVLKQLGDHTTSMDRYEQELGSAVPGDPRDTSTPRAFAEDLRAFAVEDGEKAALAPNDREQLNDWMSGSRTGDALIRAGVPKDWKVEDKSGQVKYGTRNDIAVVRPPGRAPIVVSVMSHGDTQDAEPHDELVAEAGLVVADGLK.

The N-terminal stretch at 1-26 (MRIRPTRRLLLGAVAPLALVPLVACG) is a signal peptide. A disordered region spans residues 30-50 (GSESGQQPGLGGCGTSAHGSA). S93 functions as the Acyl-ester intermediate in the catalytic mechanism. Residue 270 to 272 (KSG) participates in substrate binding.

Belongs to the class-A beta-lactamase family.

It catalyses the reaction a beta-lactam + H2O = a substituted beta-amino acid. This chain is Beta-lactamase 1 (blaL), found in Streptomyces cacaoi.